The sequence spans 1066 residues: Hemoglobin and hemoglobin-haptoglobin-binding protein C (1066 aa).

The signal sequence occupies residues 1–24 (MTNFKFTLLARSIAFALNASTAYA). A run of 7 repeats spans residues 26–29 (QPTN), 30–33 (QPTN), 34–37 (QPTN), 38–41 (QPTN), 42–45 (QPTN), 46–49 (QPTN), and 50–53 (QPTN). A 7 X 4 AA tandem repeats of Q-P-T-N region spans residues 26-53 (QPTNQPTNQPTNQPTNQPTNQPTNQPTN). A compositionally biased stretch (low complexity) spans 26–54 (QPTNQPTNQPTNQPTNQPTNQPTNQPTNQ). Positions 26–57 (QPTNQPTNQPTNQPTNQPTNQPTNQPTNQDSN) are disordered. Positions 63–70 (EQINVSGS) match the TonB box motif. One can recognise a TBDR plug domain in the interval 66–200 (NVSGSTETIN…LGGSVIFETK (135 aa)). The 859-residue stretch at 208–1066 (DKDYYVSYKR…NYRMSVQFEF (859 aa)) folds into the TBDR beta-barrel domain. The short motif at 1049 to 1066 (NRLYAPGRNYRMSVQFEF) is the TonB C-terminal box element.

Belongs to the TonB-dependent receptor family. Hemoglobin/haptoglobin binding protein subfamily.

It localises to the cell outer membrane. Acts as a receptor for hemoglobin or the hemoglobin/haptoglobin complex of the human host and is required for heme uptake. This Haemophilus influenzae protein is Hemoglobin and hemoglobin-haptoglobin-binding protein C (hgpC).